A 249-amino-acid polypeptide reads, in one-letter code: 5'-nucleotidase SurE (249 aa).

Residues D8, D9, S39, and N91 each contribute to the a divalent metal cation site.

Belongs to the SurE nucleotidase family. A divalent metal cation is required as a cofactor.

The protein resides in the cytoplasm. The catalysed reaction is a ribonucleoside 5'-phosphate + H2O = a ribonucleoside + phosphate. Its function is as follows. Nucleotidase that shows phosphatase activity on nucleoside 5'-monophosphates. The polypeptide is 5'-nucleotidase SurE (Pseudomonas syringae pv. syringae (strain B728a)).